The sequence spans 281 residues: UPF0162 protein XF_1494 (281 aa).

TPR repeat units follow at residues 193-226 (VRIL…VPNQ) and 227-260 (PEAL…YPST).

The protein belongs to the UPF0162 family.

The polypeptide is UPF0162 protein XF_1494 (Xylella fastidiosa (strain 9a5c)).